We begin with the raw amino-acid sequence, 513 residues long: Pantetheinase (513 aa).

Residues 1 to 21 (MTTQLPAYVAILLFYVSRASC) form the signal peptide. An N-linked (GlcNAc...) asparagine glycan is attached at Asn38. The region spanning 39–306 (ATLTPVSREE…GKLLLSQLDS (268 aa)) is the CN hydrolase domain. Residue Glu79 is the Proton acceptor of the active site. The N-linked (GlcNAc...) asparagine glycan is linked to Asn130. Lys178 acts as the Proton donor in catalysis. N-linked (GlcNAc...) asparagine glycosylation occurs at Asn200. Residue Cys211 is the Nucleophile of the active site. N-linked (GlcNAc...) asparagine glycosylation is found at Asn283, Asn315, and Asn353. Gly491 carries the GPI-anchor amidated glycine lipid modification. Residues 492–513 (LTAQARIIMLIVIAPIVCSLSW) constitute a propeptide, removed in mature form.

Belongs to the carbon-nitrogen hydrolase superfamily. BTD/VNN family. Monomer. In terms of tissue distribution, widely expressed with higher expression in spleen, kidney and blood. Overexpressed in lesional psoriatic skin.

Its subcellular location is the cell membrane. It catalyses the reaction (R)-pantetheine + H2O = cysteamine + (R)-pantothenate. In terms of biological role, amidohydrolase that hydrolyzes specifically one of the carboamide linkages in D-pantetheine thus recycling pantothenic acid (vitamin B5) and releasing cysteamine. The chain is Pantetheinase (VNN1) from Homo sapiens (Human).